The primary structure comprises 456 residues: Acetylcholine receptor subunit alpha (456 aa).

The first 20 residues, 1 to 20, serve as a signal peptide directing secretion; that stretch reads MNYFILILPILPYLYGPAVC. The Extracellular segment spans residues 21-230; the sequence is SEDETRLVKT…ITYHFLLLRL (210 aa). Disulfide bonds link cysteine 148/cysteine 162 and cysteine 212/cysteine 213. Asparagine 161 carries N-linked (GlcNAc...) asparagine glycosylation. The next 3 helical transmembrane spans lie at 231–255, 263–281, and 297–316; these read PLYF…VFYL, MTLS…LVIV, and YMLF…VIVI. Topologically, residues 317 to 428 are cytoplasmic; that stretch reads NTHHRSPSTH…WKFVAMVLDH (112 aa). The chain crosses the membrane as a helical span at residues 429–447; the sequence is ILLCVFMAVCIIGTLGVFA.

This sequence belongs to the ligand-gated ion channel (TC 1.A.9) family. Acetylcholine receptor (TC 1.A.9.1) subfamily. Alpha-1/CHRNA1 sub-subfamily. One of the alpha chains that assemble within the acetylcholine receptor, a pentamer of two alpha chains, a beta, a delta, and a gamma or epsilon chains.

Its subcellular location is the postsynaptic cell membrane. It is found in the cell membrane. It catalyses the reaction K(+)(in) = K(+)(out). The catalysed reaction is Na(+)(in) = Na(+)(out). Functionally, upon acetylcholine binding, the AChR responds by an extensive change in conformation that affects all subunits and leads to opening of an ion-conducting channel across the plasma membrane. The sequence is that of Acetylcholine receptor subunit alpha (chrna1) from Danio rerio (Zebrafish).